The sequence spans 185 residues: Flavodoxin (185 aa).

Residues 4-159 (VLVIYDTRTG…ACRRLGRRLA (156 aa)) enclose the Flavodoxin-like domain.

Belongs to the flavodoxin family. It depends on FMN as a cofactor.

In terms of biological role, low-potential electron donor to a number of redox enzymes. The polypeptide is Flavodoxin (fldA) (Aquifex aeolicus (strain VF5)).